The primary structure comprises 373 residues: P2Y purinoceptor 1 (373 aa).

At 1–51 (MTEVLWPAVPNGTDAAFLAGPGSSWGNSTVASTAAVSSSFKCALTKTGFQF) the chain is on the extracellular side. N-linked (GlcNAc...) asparagine glycosylation is found at asparagine 11 and asparagine 27. 2 cysteine pairs are disulfide-bonded: cysteine 42–cysteine 296 and cysteine 124–cysteine 202. An ADP-binding site is contributed by lysine 46. The chain crosses the membrane as a helical span at residues 52-74 (YYLPAVYILVFIIGFLGNSVAIW). Over 75-87 (MFVFHMKPWSGIS) the chain is Cytoplasmic. The chain crosses the membrane as a helical span at residues 88–109 (VYMFNLALADFLYVLTLPALIF). Over 110-125 (YYFNKTDWIFGDAMCK) the chain is Extracellular. N-linked (GlcNAc...) asparagine glycosylation is present at asparagine 113. Residues 126–147 (LQRFIFHVNLYGSILFLTCISA) traverse the membrane as a helical segment. The Cytoplasmic portion of the chain corresponds to 148–166 (HRYSGVVYPLKSLGRLKKK). The helical transmembrane segment at 167–188 (NAICISVLVWLIVVVAISPILF) threads the bilayer. Topologically, residues 189-214 (YSGTGVRKNKTITCYDTTSDEYLRSY) are extracellular. Residue asparagine 197 is glycosylated (N-linked (GlcNAc...) asparagine). 203 to 205 (YDT) lines the ADP pocket. The helical transmembrane segment at 215–237 (FIYSMCTTVAMFCVPLVLILGCY) threads the bilayer. Residues 238–260 (GLIVRALIYKDLDNSPLRRKSIY) are Cytoplasmic-facing. A helical membrane pass occupies residues 261–284 (LVIIVLTVFAVSYIPFHVMKTMNL). ADP contacts are provided by residues 283-287 (NLRAR), 303-306 (YATY), and arginine 310. The Extracellular portion of the chain corresponds to 285-303 (RARLDFQTPAMCAFNDRVY). A helical membrane pass occupies residues 304 to 325 (ATYQVTRGLASLNSCVDPILYF). Residues 326 to 373 (LAGDTFRRRLSRATRKASRRSEANLQSKSEDMTLNILPEFKQNGDTSL) are Cytoplasmic-facing.

It belongs to the G-protein coupled receptor 1 family.

The protein resides in the cell membrane. With respect to regulation, ATP functions as antagonist and inhibits ADP-induced mobilization of Ca(2+). The P2Y1 receptor-specific antagonists A3P5PS, A3P5P and A2P5P inhibit downstream signaling mediated by mobilization of Ca(2+) from intracellular stores, and platelet shape changes in response to extracellular ADP. In terms of biological role, receptor for extracellular adenine nucleotides such as ADP. In platelets, binding to ADP leads to mobilization of intracellular calcium ions via activation of phospholipase C, a change in platelet shape, and ultimately platelet aggregation. The protein is P2Y purinoceptor 1 (P2RY1) of Homo sapiens (Human).